We begin with the raw amino-acid sequence, 1051 residues long: Probable valine--tRNA ligase, mitochondrial (1051 aa).

Residues 1 to 20 constitute a mitochondrion transit peptide; sequence MNKLLFLSKKSSTSNLYRFY. The 'HIGH' region motif lies at 71–81; the sequence is PNVTGSLHIGH. A 'KMSKS' region motif is present at residues 606 to 610; it reads KMSKS. K609 contributes to the ATP binding site. The stretch at 972–1019 forms a coiled coil; it reads KELQISIEFDKEINNQLNQKLINPNQSNDKKILKLENFIKQLQDEIDN.

The protein belongs to the class-I aminoacyl-tRNA synthetase family.

The protein localises to the mitochondrion. The enzyme catalyses tRNA(Val) + L-valine + ATP = L-valyl-tRNA(Val) + AMP + diphosphate. The protein is Probable valine--tRNA ligase, mitochondrial (valS2) of Dictyostelium discoideum (Social amoeba).